The chain runs to 1080 residues: Histone-lysine N-methyltransferase, H3 lysine-4 specific (1080 aa).

3 disordered regions span residues 1 to 46, 54 to 73, and 78 to 121; these read MSNY…SQYN, NDGT…NNAS, and YATN…SSGS. A binds SWD2 region spans residues 1 to 230; it reads MSNYYRRAHA…THRKCRNSLI (230 aa). The segment covering 11-28 has biased composition (polar residues); it reads SSGSYRQPQEQPQYSRSG. Over residues 29-46 the composition is skewed to low complexity; that stretch reads HYQYSNGHSHQQYSSQYN. Positions 54 to 67 are enriched in basic and acidic residues; sequence NDGTRRRYNDDRPH. Polar residues-rich tracts occupy residues 78–87 and 99–121; these read YATNNSQSGP and RGMS…SSGS. A binds RNA region spans residues 230–569; sequence ILLPRISYDR…ALDHANFPEL (340 aa). Residues 356–569 are binds SHG1; it reads KKLQKLQENL…ALDHANFPEL (214 aa). S625 is subject to Phosphoserine. Residues 646–729 form a disordered region; sequence AHLLNEETDS…DQNGSSDVLD (84 aa). The segment covering 674–692 has biased composition (acidic residues); the sequence is DEEDENMTSSSSEEEEEEA. Positions 693–712 are enriched in basic and acidic residues; the sequence is PDKKFKSESEPTTPESDHLH. The binds SPP1 stretch occupies residues 762 to 938; it reads MDLQNAIKDE…SLNQLNKRKK (177 aa). The interval 762–938 is contributes to RNA binding; that stretch reads MDLQNAIKDE…SLNQLNKRKK (177 aa). The interval 762–938 is required for catalytic activity; that stretch reads MDLQNAIKDE…SLNQLNKRKK (177 aa). Residue T875 is modified to Phosphothreonine. Composition is skewed to basic and acidic residues over residues 877 to 890 and 899 to 909; these read ELCQ…KEPS and SSRDNRASNRR. The segment at 877–909 is disordered; it reads ELCQREESSNKEPSDSVPQEVSSSRDNRASNRR. The short motif at 904–909 is the RxxxRR motif element; sequence RASNRR. The SET domain occupies 938–1055; that stretch reads KPVMFARSAI…ASEELTYDYK (118 aa). Y1054 is an S-adenosyl-L-methionine binding site. Residues 1064-1080 enclose the Post-SET domain; sequence ERLPCLCGAPNCKGFLN.

Belongs to the class V-like SAM-binding methyltransferase superfamily. As to quaternary structure, component of the Set1C/COMPASS complex which consists of SET1(2), BRE2(2), SPP1(2), SDC1(1), SHG1(1), SWD1(1), SWD2(1), and SWD3(1). Interacts with MEC3.

It is found in the nucleus. The protein resides in the chromosome. The catalysed reaction is L-lysyl(4)-[histone H3] + 3 S-adenosyl-L-methionine = N(6),N(6),N(6)-trimethyl-L-lysyl(4)-[histone H3] + 3 S-adenosyl-L-homocysteine + 3 H(+). The enzyme catalyses N(6)-methyl-L-lysyl(4)-[histone H3] + S-adenosyl-L-methionine = N(6),N(6)-dimethyl-L-lysyl(4)-[histone H3] + S-adenosyl-L-homocysteine + H(+). It carries out the reaction N(6),N(6)-dimethyl-L-lysyl(4)-[histone H3] + S-adenosyl-L-methionine = N(6),N(6),N(6)-trimethyl-L-lysyl(4)-[histone H3] + S-adenosyl-L-homocysteine + H(+). In terms of biological role, catalytic component of the COMPASS (Set1C) complex that specifically mono-, di- and trimethylates histone H3 to form H3K4me1/2/3. Binds RNAs involved in chromosome segregation, splicing and transcriptional regulation; appears to bind transcripts both co- and post-transcriptionally and binding might negatively affect its histone methyltransferase activity. COMPASS recognizes ubiquitinated H2B on one face of the nucleosome which stimulates the methylation of H3 on the opposing face. Plays a role in telomere length maintenance and transcription elongation regulation. This chain is Histone-lysine N-methyltransferase, H3 lysine-4 specific, found in Saccharomyces cerevisiae (strain ATCC 204508 / S288c) (Baker's yeast).